The following is a 298-amino-acid chain: Probable endonuclease 4 (298 aa).

The Zn(2+) site is built by H69, H111, E146, D180, H183, H215, D228, H230, and E260.

Belongs to the AP endonuclease 2 family. The cofactor is Zn(2+).

The enzyme catalyses Endonucleolytic cleavage to 5'-phosphooligonucleotide end-products.. In terms of biological role, endonuclease IV plays a role in DNA repair. It cleaves phosphodiester bonds at apurinic or apyrimidinic (AP) sites, generating a 3'-hydroxyl group and a 5'-terminal sugar phosphate. This Bacillus mycoides (strain KBAB4) (Bacillus weihenstephanensis) protein is Probable endonuclease 4.